We begin with the raw amino-acid sequence, 275 residues long: NH(3)-dependent NAD(+) synthetase (275 aa).

Glycine 46–serine 53 serves as a coordination point for ATP. Mg(2+) is bound at residue aspartate 52. Position 140 (arginine 140) interacts with deamido-NAD(+). An ATP-binding site is contributed by threonine 160. Glutamate 165 contacts Mg(2+). Residues lysine 173 and aspartate 180 each contribute to the deamido-NAD(+) site. 2 residues coordinate ATP: lysine 189 and threonine 211. Histidine 260 to lysine 261 provides a ligand contact to deamido-NAD(+).

It belongs to the NAD synthetase family. Homodimer.

The catalysed reaction is deamido-NAD(+) + NH4(+) + ATP = AMP + diphosphate + NAD(+) + H(+). Its pathway is cofactor biosynthesis; NAD(+) biosynthesis; NAD(+) from deamido-NAD(+) (ammonia route): step 1/1. Catalyzes the ATP-dependent amidation of deamido-NAD to form NAD. Uses ammonia as a nitrogen source. In Enterobacter sp. (strain 638), this protein is NH(3)-dependent NAD(+) synthetase.